We begin with the raw amino-acid sequence, 275 residues long: Dihydropteroate synthase (275 aa).

Positions 15-267 constitute a Pterin-binding domain; that stretch reads PQIMGILNFT…DVAATSDMLK (253 aa). Asparagine 22 lines the Mg(2+) pocket. Residues threonine 62, aspartate 96, asparagine 115, aspartate 185, lysine 221, and 255–257 each bind (7,8-dihydropterin-6-yl)methyl diphosphate; that span reads RVH.

This sequence belongs to the DHPS family. As to quaternary structure, homodimer. Requires Mg(2+) as cofactor.

The catalysed reaction is (7,8-dihydropterin-6-yl)methyl diphosphate + 4-aminobenzoate = 7,8-dihydropteroate + diphosphate. The protein operates within cofactor biosynthesis; tetrahydrofolate biosynthesis; 7,8-dihydrofolate from 2-amino-4-hydroxy-6-hydroxymethyl-7,8-dihydropteridine diphosphate and 4-aminobenzoate: step 1/2. Catalyzes the condensation of para-aminobenzoate (pABA) with 6-hydroxymethyl-7,8-dihydropterin diphosphate (DHPt-PP) to form 7,8-dihydropteroate (H2Pte), the immediate precursor of folate derivatives. The polypeptide is Dihydropteroate synthase (folP-A) (Haemophilus influenzae (strain ATCC 51907 / DSM 11121 / KW20 / Rd)).